The sequence spans 41 residues: Sucrose porin (41 aa).

Residues 1-22 (MYRKSTLAMLIALLTSAASAHA) form the signal peptide.

This sequence belongs to the porin LamB (TC 1.B.3) family. As to quaternary structure, homotrimer.

It is found in the cell outer membrane. Porin for sucrose uptake. The protein is Sucrose porin (scrY) of Salmonella thompson.